The following is a 346-amino-acid chain: GTPase Obg (346 aa).

The 159-residue stretch at 1–159 folds into the Obg domain; sequence MKFLDEAKVY…RWIWLRLKLI (159 aa). The OBG-type G domain maps to 160-327; it reads ADAGLVGLPN…ALRALVAVIG (168 aa). GTP contacts are provided by residues 166 to 173, 191 to 195, 212 to 215, 279 to 282, and 308 to 310; these read GLPNAGKS, FTTLH, DIPG, NKID, and SAA. 2 residues coordinate Mg(2+): Ser-173 and Thr-193.

It belongs to the TRAFAC class OBG-HflX-like GTPase superfamily. OBG GTPase family. In terms of assembly, monomer. Mg(2+) is required as a cofactor.

It localises to the cytoplasm. In terms of biological role, an essential GTPase which binds GTP, GDP and possibly (p)ppGpp with moderate affinity, with high nucleotide exchange rates and a fairly low GTP hydrolysis rate. Plays a role in control of the cell cycle, stress response, ribosome biogenesis and in those bacteria that undergo differentiation, in morphogenesis control. This is GTPase Obg from Bradyrhizobium diazoefficiens (strain JCM 10833 / BCRC 13528 / IAM 13628 / NBRC 14792 / USDA 110).